The chain runs to 270 residues: Tetraspanin-17 (270 aa).

The Cytoplasmic segment spans residues 1-19; it reads MPGKHQQFQDPEVGCCGKY. Residues 20-40 form a helical membrane-spanning segment; the sequence is FLFGFNIVFWVLGALFLAIGL. The Extracellular segment spans residues 41–63; sequence WAWGEKGVLSNISALTDLGGLDP. N-linked (GlcNAc...) asparagine glycosylation occurs at Asn51. Residues 64-84 traverse the membrane as a helical segment; the sequence is VWLFVVVGGVMSVLGFAGCIG. Topologically, residues 85–94 are cytoplasmic; it reads ALRENTFLLK. A helical membrane pass occupies residues 95 to 115; it reads FFSVFLGLIFFLELAAGILAF. The Extracellular portion of the chain corresponds to 116 to 234; sequence VFKDWIRDQL…GQFEKWLQDN (119 aa). 4 disulfides stabilise this stretch: Cys155–Cys223, Cys156–Cys188, Cys172–Cys182, and Cys189–Cys202. N-linked (GlcNAc...) asparagine glycosylation is present at Asn171. The helical transmembrane segment at 235-255 threads the bilayer; sequence LIVVAGVLVGIALLQIFGLCL. Over 256-270 the chain is Cytoplasmic; that stretch reads AQNLVSDIKAVKANW.

This sequence belongs to the tetraspanin (TM4SF) family. Interacts with ADAM10; the interaction influences ADAM10 substrate specificity, endocytosis and turnover.

Its subcellular location is the cell membrane. Its function is as follows. Part of TspanC8 subgroup, composed of 6 members that interact with the transmembrane metalloprotease ADAM10. This interaction is required for ADAM10 exit from the endoplasmic reticulum and for enzymatic maturation and trafficking to the cell surface as well as substrate specificity. Different TspanC8/ADAM10 complexes have distinct substrates. Seems to regulate VE-cadherin expression in endothelial cells probably through interaction with ADAM10, promoting leukocyte transmigration. The sequence is that of Tetraspanin-17 (Tspan17) from Mus musculus (Mouse).